A 115-amino-acid chain; its full sequence is Histone H2A-Bbd type 1 (115 aa).

The segment at 1–21 is disordered; the sequence is MPRRRRRRGSSGAGGRGRTCS. The tract at residues 87–115 is docking domain; sequence LLDMVVHNDRLLSTLFNTTTISQVAPGED.

The protein belongs to the histone H2A family. The nucleosome is a histone octamer containing two molecules each of H2A, H2B, H3 and H4 assembled in one H3-H4 heterotetramer and two H2A-H2B heterodimers. May be incorporated into a proportion of nucleosomes, replacing one or more H2A molecules. Present in mature sperm.

It is found in the nucleus. Its subcellular location is the chromosome. Its function is as follows. Atypical histone H2A which can replace conventional H2A in some nucleosomes and is associated with active transcription and mRNA processing. Nucleosomes wrap and compact DNA into chromatin, limiting DNA accessibility to the cellular machineries which require DNA as a template. Histones thereby play a central role in transcription regulation, DNA repair, DNA replication and chromosomal stability. Nucleosomes containing this histone are less rigid and organize less DNA than canonical nucleosomes in vivo. They are enriched in actively transcribed genes and associate with the elongating form of RNA polymerase. They associate with spliceosome components and are required for mRNA splicing. This is Histone H2A-Bbd type 1 from Homo sapiens (Human).